The chain runs to 390 residues: Guanidine hydrolase (390 aa).

6 residues coordinate Ni(2+): His174, Asp199, His201, Asp203, Asp291, and Asp293.

This sequence belongs to the arginase family. Homohexamer. Requires Ni(2+) as cofactor.

The protein resides in the cytoplasm. The enzyme catalyses guanidine + H2O = urea + NH4(+). Activation of GdmH depends on the presence of the accessory proteins GhaA (Sll1078) and GhaB (Sll1079), which load nickel into the active site. Hydrolase activity is slightly activated in the presence of GTP. It does not require ATP or NAD(P)H. Addition of Ca(2+), Mn(2+), Fe(2+) or Fe(3+) has no consistent effects, whereas addition of Co(2+), Cu(2+) or Zn(2+) inhibits the activity. Its function is as follows. Catalyzes the hydrolysis of guanidine into urea and ammonium. Is highly specific for free guanidine. At pH 8, also catalyzes the release of urea from methylguanidine but with significantly reduced specific activity compared with that for guanidine. Cannot hydrolyze guanidinoacetate, guanidinopropionate, guanidinobutyrate, agmatine, arginine or creatine. Required to use guanidine as the sole nitrogen source for growth. Overexpression of the gene accelerates guanidine degradation and promotes biomass growth. The chain is Guanidine hydrolase from Synechocystis sp. (strain ATCC 27184 / PCC 6803 / Kazusa).